Consider the following 338-residue polypeptide: Aspartate-semialdehyde dehydrogenase (338 aa).

NADP(+)-binding positions include 9–12 (TGQV) and 37–38 (RS). Arginine 93 lines the phosphate pocket. The active-site Acyl-thioester intermediate is the cysteine 123. Glutamine 150 contributes to the substrate binding site. 153–154 (SG) provides a ligand contact to NADP(+). Lysine 220 is a binding site for phosphate. Residue arginine 242 participates in substrate binding. Catalysis depends on histidine 249, which acts as the Proton acceptor. Asparagine 316 is a binding site for NADP(+).

The protein belongs to the aspartate-semialdehyde dehydrogenase family. Homodimer.

It catalyses the reaction L-aspartate 4-semialdehyde + phosphate + NADP(+) = 4-phospho-L-aspartate + NADPH + H(+). It functions in the pathway amino-acid biosynthesis; L-lysine biosynthesis via DAP pathway; (S)-tetrahydrodipicolinate from L-aspartate: step 2/4. It participates in amino-acid biosynthesis; L-methionine biosynthesis via de novo pathway; L-homoserine from L-aspartate: step 2/3. Its pathway is amino-acid biosynthesis; L-threonine biosynthesis; L-threonine from L-aspartate: step 2/5. In terms of biological role, catalyzes the NADPH-dependent formation of L-aspartate-semialdehyde (L-ASA) by the reductive dephosphorylation of L-aspartyl-4-phosphate. In Streptomyces akiyoshiensis, this protein is Aspartate-semialdehyde dehydrogenase.